The following is a 64-amino-acid chain: Large ribosomal subunit protein bL35 (64 aa).

Residues 1–22 (MPKAKTHSGASKRFRRTGTGKI) are disordered.

The protein belongs to the bacterial ribosomal protein bL35 family.

The polypeptide is Large ribosomal subunit protein bL35 (Mycobacterium tuberculosis (strain ATCC 25177 / H37Ra)).